The sequence spans 236 residues: Glucosamine-6-phosphate deaminase (236 aa).

Aspartate 62 functions as the Proton acceptor; for enolization step in the catalytic mechanism. The For ring-opening step role is filled by asparagine 128. Histidine 130 serves as the catalytic Proton acceptor; for ring-opening step. Glutamate 135 (for ring-opening step) is an active-site residue.

This sequence belongs to the glucosamine/galactosamine-6-phosphate isomerase family. NagB subfamily.

The enzyme catalyses alpha-D-glucosamine 6-phosphate + H2O = beta-D-fructose 6-phosphate + NH4(+). The protein operates within amino-sugar metabolism; N-acetylneuraminate degradation; D-fructose 6-phosphate from N-acetylneuraminate: step 5/5. In terms of biological role, catalyzes the reversible isomerization-deamination of glucosamine 6-phosphate (GlcN6P) to form fructose 6-phosphate (Fru6P) and ammonium ion. The sequence is that of Glucosamine-6-phosphate deaminase from Lacticaseibacillus paracasei (strain ATCC 334 / BCRC 17002 / CCUG 31169 / CIP 107868 / KCTC 3260 / NRRL B-441) (Lactobacillus paracasei).